The following is a 473-amino-acid chain: Chromosomal replication initiator protein DnaA (473 aa).

Residues 1-90 (MSSSLWLQCL…KRVTAPKSET (90 aa)) form a domain I, interacts with DnaA modulators region. A domain II region spans residues 91-136 (IAPARTRTAADVAAESSAPAQLQARKPVHNIWRDEEPVAVDLNHRS). Residues 137–353 (NVNPKHKFNN…GALNRVIANA (217 aa)) are domain III, AAA+ region. ATP is bound by residues Gly-181, Gly-183, Lys-184, and Thr-185. A domain IV, binds dsDNA region spans residues 354–473 (NFTGRPITID…YSNLIRTLSS (120 aa)).

The protein belongs to the DnaA family. As to quaternary structure, oligomerizes as a right-handed, spiral filament on DNA at oriC.

The protein resides in the cytoplasm. Plays an essential role in the initiation and regulation of chromosomal replication. ATP-DnaA binds to the origin of replication (oriC) to initiate formation of the DNA replication initiation complex once per cell cycle. Binds the DnaA box (a 9 base pair repeat at the origin) and separates the double-stranded (ds)DNA. Forms a right-handed helical filament on oriC DNA; dsDNA binds to the exterior of the filament while single-stranded (ss)DNA is stabiized in the filament's interior. The ATP-DnaA-oriC complex binds and stabilizes one strand of the AT-rich DNA unwinding element (DUE), permitting loading of DNA polymerase. After initiation quickly degrades to an ADP-DnaA complex that is not apt for DNA replication. Binds acidic phospholipids. The chain is Chromosomal replication initiator protein DnaA from Vibrio atlanticus (strain LGP32) (Vibrio splendidus (strain Mel32)).